The primary structure comprises 81 residues: Large ribosomal subunit protein bL31B (81 aa).

This sequence belongs to the bacterial ribosomal protein bL31 family. Type B subfamily. In terms of assembly, part of the 50S ribosomal subunit.

The sequence is that of Large ribosomal subunit protein bL31B from Pediococcus pentosaceus (strain ATCC 25745 / CCUG 21536 / LMG 10740 / 183-1w).